The sequence spans 188 residues: ATP synthase subunit b (188 aa).

Residues 21–41 (ILPHLGELIVGIIFAIIIYAV) traverse the membrane as a helical segment.

It belongs to the ATPase B chain family. As to quaternary structure, F-type ATPases have 2 components, F(1) - the catalytic core - and F(0) - the membrane proton channel. F(1) has five subunits: alpha(3), beta(3), gamma(1), delta(1), epsilon(1). F(0) has three main subunits: a(1), b(2) and c(10-14). The alpha and beta chains form an alternating ring which encloses part of the gamma chain. F(1) is attached to F(0) by a central stalk formed by the gamma and epsilon chains, while a peripheral stalk is formed by the delta and b chains.

The protein resides in the cell membrane. Its function is as follows. F(1)F(0) ATP synthase produces ATP from ADP in the presence of a proton or sodium gradient. F-type ATPases consist of two structural domains, F(1) containing the extramembraneous catalytic core and F(0) containing the membrane proton channel, linked together by a central stalk and a peripheral stalk. During catalysis, ATP synthesis in the catalytic domain of F(1) is coupled via a rotary mechanism of the central stalk subunits to proton translocation. In terms of biological role, component of the F(0) channel, it forms part of the peripheral stalk, linking F(1) to F(0). This chain is ATP synthase subunit b, found in Kineococcus radiotolerans (strain ATCC BAA-149 / DSM 14245 / SRS30216).